The chain runs to 313 residues: Acetaldehyde dehydrogenase 3 (313 aa).

An NAD(+)-binding site is contributed by 13-16 (SGNI). Catalysis depends on Cys-133, which acts as the Acyl-thioester intermediate. NAD(+) contacts are provided by residues 164-172 (SAGPGTRAN) and Asn-291.

This sequence belongs to the acetaldehyde dehydrogenase family.

It catalyses the reaction acetaldehyde + NAD(+) + CoA = acetyl-CoA + NADH + H(+). The sequence is that of Acetaldehyde dehydrogenase 3 from Paraburkholderia xenovorans (strain LB400).